The sequence spans 181 residues: Putative ankyrin repeat protein RBE_0150 (181 aa).

ANK repeat units follow at residues 50–79, 83–114, 118–147, and 151–180; these read IGQK…KLGT, LGRT…DINA, SGST…DYFT, and LGQT…AGYY.

The polypeptide is Putative ankyrin repeat protein RBE_0150 (Rickettsia bellii (strain RML369-C)).